The primary structure comprises 280 residues: Energy-coupling factor transporter ATP-binding protein EcfA2 (280 aa).

In terms of domain architecture, ABC transporter spans 3 to 245 (INLQNVSYTY…VSLLEKKQLG (243 aa)). 40–47 (GHTGSGKS) is an ATP binding site.

Belongs to the ABC transporter superfamily. Energy-coupling factor EcfA family. As to quaternary structure, forms a stable energy-coupling factor (ECF) transporter complex composed of 2 membrane-embedded substrate-binding proteins (S component), 2 ATP-binding proteins (A component) and 2 transmembrane proteins (T component).

It localises to the cell membrane. Functionally, ATP-binding (A) component of a common energy-coupling factor (ECF) ABC-transporter complex. Unlike classic ABC transporters this ECF transporter provides the energy necessary to transport a number of different substrates. The chain is Energy-coupling factor transporter ATP-binding protein EcfA2 from Streptococcus pyogenes serotype M1.